We begin with the raw amino-acid sequence, 211 residues long: Thymidylate kinase (211 aa).

An ATP-binding site is contributed by 10-17; sequence GGDGVGKS.

Belongs to the thymidylate kinase family.

The enzyme catalyses dTMP + ATP = dTDP + ADP. Its function is as follows. Phosphorylation of dTMP to form dTDP in both de novo and salvage pathways of dTTP synthesis. This chain is Thymidylate kinase, found in Clavibacter michiganensis subsp. michiganensis (strain NCPPB 382).